Reading from the N-terminus, the 277-residue chain is MTETDGFYRSREVLDPAEQYKMDHKRRGTALIFNHERFFWHLALPERRGTNADRDNPTRRFSELGFEVKCFNDLRAEELLLKIHEVSTSSHVDADCFLCVFLSHGEGNHIYAYDAKIEIQTLTGLFKGDKCQSLVGKPKIFIIQACRGSQHDVPLVPLDVVDHQTDKLDDNVTQVDAASVYTLPAGADFLMCYSVAEGYYSHRETVNGSWYIQDLSEMLARHGSSLEFTELLTLVNRKVSQRRVDFCKDPGAIGKKQVPCFASMLTKKLHFCPKPSK.

A propeptide spanning residues 1–5 (MTETD) is cleaved from the precursor. A tri-arginine exosite region spans residues 25–27 (KRR). Serine 62 carries the post-translational modification Phosphoserine. Histidine 104 is an active-site residue. Residues 108–125 (NHIYAYDAKIEIQTLTGL) form a 130's region region. Cysteine 146 is an active-site residue. The propeptide occupies 163-176 (HQTDKLDDNVTQVD). Phosphoserine is present on serine 240. 2 S-palmitoyl cysteine lipidation sites follow: cysteine 247 and cysteine 260.

Belongs to the peptidase C14A family. Heterotetramer that consists of two anti-parallel arranged heterodimers, each one formed by a 18 kDa (p18) and a 11 kDa (p11) subunits. Interacts with BIRC6/bruce. Interacts with RIPK3. As to quaternary structure, heterotetramer that consists of two anti-parallel arranged heterodimers, each one formed by a 18 kDa (Caspase-6 subunit p18) and a 11 kDa (Caspase-6 subunit p11) subunit. In terms of processing, phosphorylated by NUAK1; phosphorylation inhibits self-activation. Phosphorylation at Ser-240 by AMP-activated protein kinase (PRKAA1 or PRKAA2) inhibits autocleavage, preventing caspase activation, thereby preventing hepatocyte apoptosis. Palmitoylation by ZDHHC17 blocks dimerization and subsequent activation, leading to inhibit the cysteine protease activity. Post-translationally, can be cleaved and activated by different caspases, depending on the context. Cleaved and activated by caspase-8 (CASP8) and subsequently by caspase-3 (CASP3). Can also undergo autoactivation by mediating autocleavage at Asp-162 and Asp-176, while it is not able to cleave its N-terminal disordered prodomain. Cleaved and activated by CASP1, possibly in the context of inflammation.

Its subcellular location is the cytoplasm. It is found in the nucleus. The enzyme catalyses Strict requirement for Asp at position P1 and has a preferred cleavage sequence of Val-Glu-His-Asp-|-.. Its activity is regulated as follows. During activation, the N-terminal disordered prodomain is removed by cleavage. Concomitantly, double cleavage gives rise to a large 18-kDa and a small 11-kDa subunit. The two large and two small subunits then assemble to form the active CASP6 complex. Can be cleaved and activated by different caspases, depending on the context. Cleaved and activated by caspase-8 (CASP8) and subsequently by caspase-3 (CASP3). Can also undergo autoactivation by mediating autocleavage at Asp-162 and Asp-176, while it is not able to cleave its N-terminal disordered prodomain. Intramolecular cleavage at Asp-176 is a prerequisite for CASP6 self-activation. Cleaved and activated by CASP1 in neurons, possibly in the context of inflammation. Phosphorylation at Ser-240 inhibits autocleavage, preventing caspase activation. In terms of biological role, cysteine protease that plays essential roles in programmed cell death, axonal degeneration, development and innate immunity. Acts as a non-canonical executioner caspase during apoptosis: localizes in the nucleus and cleaves the nuclear structural protein NUMA1 and lamin A/LMNA thereby inducing nuclear shrinkage and fragmentation. Lamin-A/LMNA cleavage is required for chromatin condensation and nuclear disassembly during apoptotic execution. Acts as a regulator of liver damage by promoting hepatocyte apoptosis: in absence of phosphorylation by AMP-activated protein kinase (AMPK), catalyzes cleavage of BID, leading to cytochrome c release, thereby participating in nonalcoholic steatohepatitis. Cleaves PARK7/DJ-1 in cells undergoing apoptosis. Involved in intrinsic apoptosis by mediating cleavage of RIPK1. Furthermore, cleaves many transcription factors such as NF-kappa-B and cAMP response element-binding protein/CREBBP. Cleaves phospholipid scramblase proteins XKR4 and XKR9. In addition to apoptosis, involved in different forms of programmed cell death. Plays an essential role in defense against viruses by acting as a central mediator of the ZBP1-mediated pyroptosis, apoptosis, and necroptosis (PANoptosis), independently of its cysteine protease activity. PANoptosis is a unique inflammatory programmed cell death, which provides a molecular scaffold that allows the interactions and activation of machinery required for inflammasome/pyroptosis, apoptosis and necroptosis. Mechanistically, interacts with RIPK3 and enhances the interaction between RIPK3 and ZBP1, leading to ZBP1-mediated inflammasome activation and cell death. Plays an essential role in axon degeneration during axon pruning which is the remodeling of axons during neurogenesis but not apoptosis. Regulates B-cell programs both during early development and after antigen stimulation. The chain is Caspase-6 from Rattus norvegicus (Rat).